A 98-amino-acid chain; its full sequence is NADH-ubiquinone oxidoreductase chain 4L (98 aa).

3 consecutive transmembrane segments (helical) span residues 1 to 21, 29 to 49, and 61 to 81; these read MSLV…GLLM, SLLC…LTIL, and IILL…LVMV.

It belongs to the complex I subunit 4L family. As to quaternary structure, core subunit of respiratory chain NADH dehydrogenase (Complex I) which is composed of 45 different subunits.

It is found in the mitochondrion inner membrane. The catalysed reaction is a ubiquinone + NADH + 5 H(+)(in) = a ubiquinol + NAD(+) + 4 H(+)(out). In terms of biological role, core subunit of the mitochondrial membrane respiratory chain NADH dehydrogenase (Complex I) which catalyzes electron transfer from NADH through the respiratory chain, using ubiquinone as an electron acceptor. Part of the enzyme membrane arm which is embedded in the lipid bilayer and involved in proton translocation. The sequence is that of NADH-ubiquinone oxidoreductase chain 4L (MT-ND4L) from Rangifer tarandus (Reindeer).